Consider the following 228-residue polypeptide: Ribonuclease 3 (228 aa).

Residues 5–134 (RSKLEKDYGI…FLGALLLDKG (130 aa)) enclose the RNase III domain. Glu-47 lines the Mg(2+) pocket. Asp-51 is a catalytic residue. Mg(2+) contacts are provided by Asp-120 and Glu-123. The active site involves Glu-123. A DRBM domain is found at 160-228 (DYKTSLQELL…AAKNALATLQ (69 aa)).

This sequence belongs to the ribonuclease III family. As to quaternary structure, homodimer. It depends on Mg(2+) as a cofactor.

It localises to the cytoplasm. The enzyme catalyses Endonucleolytic cleavage to 5'-phosphomonoester.. Its function is as follows. Digests double-stranded RNA. Involved in the processing of primary rRNA transcript to yield the immediate precursors to the large and small rRNAs (23S and 16S). Processes some mRNAs, and tRNAs when they are encoded in the rRNA operon. Processes pre-crRNA and tracrRNA of type II CRISPR loci if present in the organism. This is Ribonuclease 3 from Streptococcus agalactiae serotype III (strain NEM316).